The primary structure comprises 169 residues: MVRDIVIYPNEILKKPTEKVDVIDKEVKNLIRDMFDTMYEAEGVGLAANQIGVPLSVMVIDTSPKEDAPPLKLVLINPEIKEGEGKIKYKEGCLSFPGLSVEVERFQKVKVNALNEHGEPVELTLEGFPAIVFQHELDHLKGITFVDRLKGWRRRMALEKYQKLLKSRK.

The Fe cation site is built by cysteine 93 and histidine 135. Residue glutamate 136 is part of the active site. A Fe cation-binding site is contributed by histidine 139.

It belongs to the polypeptide deformylase family. The cofactor is Fe(2+).

It catalyses the reaction N-terminal N-formyl-L-methionyl-[peptide] + H2O = N-terminal L-methionyl-[peptide] + formate. Removes the formyl group from the N-terminal Met of newly synthesized proteins. Requires at least a dipeptide for an efficient rate of reaction. N-terminal L-methionine is a prerequisite for activity but the enzyme has broad specificity at other positions. This is Peptide deformylase from Aquifex aeolicus (strain VF5).